Here is a 420-residue protein sequence, read N- to C-terminus: Serine hydroxymethyltransferase (420 aa).

Residues Leu-123 and 127–129 (GHL) contribute to the (6S)-5,6,7,8-tetrahydrofolate site. Lys-232 carries the N6-(pyridoxal phosphate)lysine modification.

Belongs to the SHMT family. Homodimer. Requires pyridoxal 5'-phosphate as cofactor.

The protein resides in the cytoplasm. The enzyme catalyses (6R)-5,10-methylene-5,6,7,8-tetrahydrofolate + glycine + H2O = (6S)-5,6,7,8-tetrahydrofolate + L-serine. It participates in one-carbon metabolism; tetrahydrofolate interconversion. It functions in the pathway amino-acid biosynthesis; glycine biosynthesis; glycine from L-serine: step 1/1. Its function is as follows. Catalyzes the reversible interconversion of serine and glycine with tetrahydrofolate (THF) serving as the one-carbon carrier. This reaction serves as the major source of one-carbon groups required for the biosynthesis of purines, thymidylate, methionine, and other important biomolecules. Also exhibits THF-independent aldolase activity toward beta-hydroxyamino acids, producing glycine and aldehydes, via a retro-aldol mechanism. This Ehrlichia chaffeensis (strain ATCC CRL-10679 / Arkansas) protein is Serine hydroxymethyltransferase.